Here is a 134-residue protein sequence, read N- to C-terminus: Profilin (134 aa).

This sequence belongs to the profilin family. As to quaternary structure, occurs in many kinds of cells as a complex with monomeric actin in a 1:1 ratio.

It is found in the cytoplasm. Its subcellular location is the cytoskeleton. In terms of biological role, binds to actin and affects the structure of the cytoskeleton. At high concentrations, profilin prevents the polymerization of actin, whereas it enhances it at low concentrations. By binding to PIP2, it inhibits the formation of IP3 and DG. This Apium graveolens (Celery) protein is Profilin.